The following is a 550-amino-acid chain: Aldehyde dehydrogenase family 3 member I1, chloroplastic (550 aa).

Residues 1 to 59 (MTKLLEINHIQTLCFAKGFSPARLNVATSPFRISRRGGGGYCSNACIPYRLKFTCYATL) constitute a chloroplast transit peptide. 259–264 (GGARVA) lines the NAD(+) pocket. Glutamate 281 (proton acceptor) is an active-site residue. The Nucleophile role is filled by cysteine 316.

The protein belongs to the aldehyde dehydrogenase family. Homodimer and homomultimer.

It localises to the plastid. The protein localises to the chloroplast. It catalyses the reaction an aldehyde + NAD(+) + H2O = a carboxylate + NADH + 2 H(+). Its activity is regulated as follows. Thiol-based regulation. Inactivation after dimerization under oxidizing conditions. Its function is as follows. Involved in oxidative stress tolerance by detoxifying reactive aldehydes derived from lipid peroxidation. Medium- to long-chain saturated aldehydes are preferred substrates, while the short-chain aldehyde propanal is a weak substrate. Can use both NAD(+) and NADP(+), but the coenzyme preference is substrate dependent. The protein is Aldehyde dehydrogenase family 3 member I1, chloroplastic (ALDH3I1) of Arabidopsis thaliana (Mouse-ear cress).